Consider the following 382-residue polypeptide: Chaperone protein DnaJ (382 aa).

In terms of domain architecture, J spans 5–69; that stretch reads DYYEILGVSK…EKRARYDRFG (65 aa). Residues 137 to 219 form a CR-type zinc finger; it reads GKETEIEIPR…CGGTGRVKRR (83 aa). Residues C150, C153, C167, C170, C193, C196, C207, and C210 each contribute to the Zn(2+) site. CXXCXGXG motif repeat units follow at residues 150-157, 167-174, 193-200, and 207-214; these read CDTCQGSG, CPHCHGSG, CPVCGGTG, and CPTCGGTG. The interval 154–175 is disordered; the sequence is QGSGAKPGTSPTSCPHCHGSGQ.

It belongs to the DnaJ family. In terms of assembly, homodimer. The cofactor is Zn(2+).

The protein resides in the cytoplasm. In terms of biological role, participates actively in the response to hyperosmotic and heat shock by preventing the aggregation of stress-denatured proteins and by disaggregating proteins, also in an autonomous, DnaK-independent fashion. Unfolded proteins bind initially to DnaJ; upon interaction with the DnaJ-bound protein, DnaK hydrolyzes its bound ATP, resulting in the formation of a stable complex. GrpE releases ADP from DnaK; ATP binding to DnaK triggers the release of the substrate protein, thus completing the reaction cycle. Several rounds of ATP-dependent interactions between DnaJ, DnaK and GrpE are required for fully efficient folding. Also involved, together with DnaK and GrpE, in the DNA replication of plasmids through activation of initiation proteins. This Geobacillus kaustophilus (strain HTA426) protein is Chaperone protein DnaJ.